Reading from the N-terminus, the 388-residue chain is Glucose-6-phosphate/phosphate translocator 1, chloroplastic (388 aa).

Residues 1–65 (MVLSVKQTLS…LRAKSPVVRC (65 aa)) constitute a chloroplast transit peptide. The next 8 membrane-spanning stretches (helical) occupy residues 95 to 115 (LKIG…NIYN), 129 to 149 (STLS…VGIV), 158 to 178 (FWKT…AATV), 211 to 231 (FPTS…LSAL), 233 to 253 (ELNF…AFVF), 273 to 293 (YACL…AVEG), 305 to 325 (LATV…FYHL), and 363 to 383 (TPVQ…TFLY). One can recognise an EamA domain in the interval 112-229 (NIYNKKVLNA…IPIIGGCALS (118 aa)).

Belongs to the TPT transporter family. GPT (TC 2.A.7.9) subfamily. Expressed in seeds, flowers, rosette leaves, and roots, with highest levels found in stamens. Found in the root cap, in guard cells and in mesophyll cells.

The protein localises to the plastid. The protein resides in the chloroplast membrane. It is found in the endoplasmic reticulum membrane. It localises to the peroxisome membrane. Its function is as follows. Glucose 6-phosphate (Glc6P) transporter. Also transports inorganic phosphate, 3-phosphoglycerate, triose phosphates and, to a leser extent, phosphoenolpyruvate. Responsible for the transport of Glc6P into plastids of heterotrophic tissues where it can be used as a carbon source for starch biosynthesis, as substrate for fatty acid biosynthesis or as substrate for NADPH generation via the oxidative pentose phosphate pathway (OPPP). Required for pollen maturation and embryo sac development. Preferentially exchanges Glc6P for ribulose-5-phosphate (Ru5P) in reconstituted yeast proteoliposomes. May supply the substrate (Glc6P) for OPPP reactions inside peroxisomes and exchange it with the product Ru5P which leaves the organelle. The protein is Glucose-6-phosphate/phosphate translocator 1, chloroplastic of Arabidopsis thaliana (Mouse-ear cress).